Reading from the N-terminus, the 121-residue chain is Small ribosomal subunit protein uS13 (121 aa).

Residues 92 to 121 (RKGLPVRGQSSKTNARTVKGPRKTVANKKK) are disordered. The segment covering 110–121 (KGPRKTVANKKK) has biased composition (basic residues).

This sequence belongs to the universal ribosomal protein uS13 family. In terms of assembly, part of the 30S ribosomal subunit. Forms a loose heterodimer with protein S19. Forms two bridges to the 50S subunit in the 70S ribosome.

In terms of biological role, located at the top of the head of the 30S subunit, it contacts several helices of the 16S rRNA. In the 70S ribosome it contacts the 23S rRNA (bridge B1a) and protein L5 of the 50S subunit (bridge B1b), connecting the 2 subunits; these bridges are implicated in subunit movement. Contacts the tRNAs in the A and P-sites. The polypeptide is Small ribosomal subunit protein uS13 (Mycoplasma mycoides subsp. mycoides SC (strain CCUG 32753 / NCTC 10114 / PG1)).